Here is a 561-residue protein sequence, read N- to C-terminus: Oligo-1,6-glucosidase (561 aa).

The active-site Nucleophile is aspartate 199. Glutamate 256 serves as the catalytic Proton donor.

The protein belongs to the glycosyl hydrolase 13 family.

Its subcellular location is the cytoplasm. The enzyme catalyses Hydrolysis of (1-&gt;6)-alpha-D-glucosidic linkages in some oligosaccharides produced from starch and glycogen by alpha-amylase, and in isomaltose.. This Halalkalibacterium halodurans (strain ATCC BAA-125 / DSM 18197 / FERM 7344 / JCM 9153 / C-125) (Bacillus halodurans) protein is Oligo-1,6-glucosidase (malL).